A 253-amino-acid chain; its full sequence is DNA polymerase sliding clamp 2 (253 aa).

The protein belongs to the PCNA family. In terms of assembly, homotrimer. The subunits circularize to form a toroid; DNA passes through its center. Replication factor C (RFC) is required to load the toroid on the DNA. Interacts with TIP.

With respect to regulation, inhibited by interaction with the PCNA inhibitor TIP. Sliding clamp subunit that acts as a moving platform for DNA processing. Responsible for tethering the catalytic subunit of DNA polymerase and other proteins to DNA during high-speed replication. This Thermococcus kodakarensis (strain ATCC BAA-918 / JCM 12380 / KOD1) (Pyrococcus kodakaraensis (strain KOD1)) protein is DNA polymerase sliding clamp 2.